A 399-amino-acid chain; its full sequence is L-methionine gamma-lyase (399 aa).

Pyridoxal 5'-phosphate-binding positions include 59–61 (YTR) and 89–90 (GM). Y114 is a substrate binding site. Residue 209–211 (SAT) coordinates pyridoxal 5'-phosphate. K212 is subject to N6-(pyridoxal phosphate)lysine. R376 provides a ligand contact to substrate.

It belongs to the trans-sulfuration enzymes family. L-methionine gamma-lyase subfamily. As to quaternary structure, homotetramer; dimer of active dimers. The cofactor is pyridoxal 5'-phosphate.

It catalyses the reaction L-methionine + H2O = methanethiol + 2-oxobutanoate + NH4(+). Functionally, catalyzes the alpha,gamma-elimination of L-methionine to produce methanethiol, 2-oxobutanoate and ammonia. This chain is L-methionine gamma-lyase, found in Pseudomonas deceptionensis.